Here is a 90-residue protein sequence, read N- to C-terminus: MPKAKVTKNSIAPVSSNPSANRTPVKINSTGTPMWYKVIMFAFMLVGLLWLVANYLVGPQIPFMNELDAWNYGIGFGLLIIGLLMTMGWR.

The tract at residues 1-26 (MPKAKVTKNSIAPVSSNPSANRTPVK) is disordered. Positions 7–26 (TKNSIAPVSSNPSANRTPVK) are enriched in polar residues. The next 2 membrane-spanning stretches (helical) occupy residues 38-58 (VIMFAFMLVGLLWLVANYLVG) and 69-89 (AWNYGIGFGLLIIGLLMTMGW).

It belongs to the CrgA family.

It localises to the cell membrane. In terms of biological role, involved in cell division. The chain is Cell division protein CrgA from Corynebacterium efficiens (strain DSM 44549 / YS-314 / AJ 12310 / JCM 11189 / NBRC 100395).